The chain runs to 58 residues: Photosystem II reaction center protein K (58 aa).

Positions 1-21 (MFDLYLKNLLDLSDSGTVVLA) are excised as a propeptide. Residues 29–49 (IFDPIVDVLPVIPVFFLLLAF) form a helical membrane-spanning segment.

Belongs to the PsbK family. PSII is composed of 1 copy each of membrane proteins PsbA, PsbB, PsbC, PsbD, PsbE, PsbF, PsbH, PsbI, PsbJ, PsbK, PsbL, PsbM, PsbT, PsbX, PsbY, PsbZ, Psb30/Ycf12, at least 3 peripheral proteins of the oxygen-evolving complex and a large number of cofactors. It forms dimeric complexes.

It localises to the plastid. Its subcellular location is the chloroplast thylakoid membrane. Functionally, one of the components of the core complex of photosystem II (PSII). PSII is a light-driven water:plastoquinone oxidoreductase that uses light energy to abstract electrons from H(2)O, generating O(2) and a proton gradient subsequently used for ATP formation. It consists of a core antenna complex that captures photons, and an electron transfer chain that converts photonic excitation into a charge separation. This Zygnema circumcarinatum (Green alga) protein is Photosystem II reaction center protein K.